The sequence spans 362 residues: Chorismate synthase (362 aa).

Arg-47 serves as a coordination point for NADP(+). FMN-binding positions include 124–126 (RSS), Gly-286, 301–305 (KPTAT), and Arg-327.

Belongs to the chorismate synthase family. In terms of assembly, homotetramer. The cofactor is FMNH2.

It catalyses the reaction 5-O-(1-carboxyvinyl)-3-phosphoshikimate = chorismate + phosphate. It participates in metabolic intermediate biosynthesis; chorismate biosynthesis; chorismate from D-erythrose 4-phosphate and phosphoenolpyruvate: step 7/7. Its function is as follows. Catalyzes the anti-1,4-elimination of the C-3 phosphate and the C-6 proR hydrogen from 5-enolpyruvylshikimate-3-phosphate (EPSP) to yield chorismate, which is the branch point compound that serves as the starting substrate for the three terminal pathways of aromatic amino acid biosynthesis. This reaction introduces a second double bond into the aromatic ring system. The polypeptide is Chorismate synthase (Nostoc punctiforme (strain ATCC 29133 / PCC 73102)).